We begin with the raw amino-acid sequence, 210 residues long: NADH dehydrogenase [ubiquinone] iron-sulfur protein 8, mitochondrial (210 aa).

A mitochondrion-targeting transit peptide spans 1–34 (MRCLTMPTLLRALAQAAHTGPPGGRTLHSSAVAA). 2 4Fe-4S ferredoxin-type domains span residues 102–131 (RRYP…IEAE) and 141–170 (TRYD…EGPN). Residues C111, C114, C117, C121, C150, C153, C156, and C160 each contribute to the [4Fe-4S] cluster site.

Belongs to the complex I 23 kDa subunit family. As to quaternary structure, core subunit of respiratory chain NADH dehydrogenase (Complex I) which is composed of 45 different subunits. This is a component of the iron-sulfur (IP) fragment of the enzyme. Interacts with RAB5IF. Requires [4Fe-4S] cluster as cofactor.

It is found in the mitochondrion inner membrane. The enzyme catalyses a ubiquinone + NADH + 5 H(+)(in) = a ubiquinol + NAD(+) + 4 H(+)(out). Core subunit of the mitochondrial membrane respiratory chain NADH dehydrogenase (Complex I) which catalyzes electron transfer from NADH through the respiratory chain, using ubiquinone as an electron acceptor. Essential for the catalytic activity and assembly of complex I. This Macaca fascicularis (Crab-eating macaque) protein is NADH dehydrogenase [ubiquinone] iron-sulfur protein 8, mitochondrial (NDUFS8).